The sequence spans 474 residues: Gamma-aminobutyric acid receptor subunit beta-1 (474 aa).

An N-terminal signal peptide occupies residues 1–25 (MWTVQNRESLGLLSFPVMIAMVCCA). Over 26 to 245 (HSANEPSNMS…SFRLKRNIGY (220 aa)) the chain is Extracellular. Residues asparagine 33 and asparagine 105 are each glycosylated (N-linked (GlcNAc...) asparagine). Tyrosine 122 serves as a coordination point for histamine. The cysteines at positions 161 and 175 are disulfide-linked. An N-linked (GlcNAc...) asparagine glycan is attached at asparagine 174. Histamine is bound by residues 181–182 (SY) and threonine 227. The 4-aminobutanoate site is built by tyrosine 182 and threonine 227. Helical transmembrane passes span 246–267 (FILQ…SFWI), 271–293 (ASAA…STHL), and 305–327 (AIDI…YAFV). Residues 328–451 (NYIFFGKGPQ…DLTDVNSIDK (124 aa)) lie on the Cytoplasmic side of the membrane. The helical transmembrane segment at 452–473 (WSRMFFPITFSLFNVVYWLYYV) threads the bilayer.

This sequence belongs to the ligand-gated ion channel (TC 1.A.9) family. Gamma-aminobutyric acid receptor (TC 1.A.9.5) subfamily. GABRB1 sub-subfamily. Heteropentamer, formed by a combination of alpha (GABRA1-6), beta (GABRB1-3), gamma (GABRG1-3), delta (GABRD), epsilon (GABRE), rho (GABRR1-3), pi (GABRP) and theta (GABRQ) chains, each subunit exhibiting distinct physiological and pharmacological properties. Binds UBQLN1.

It localises to the postsynaptic cell membrane. It is found in the cell membrane. It catalyses the reaction chloride(in) = chloride(out). Its activity is regulated as follows. Potentiated by histamine. Beta subunit of the heteropentameric ligand-gated chloride channel gated by gamma-aminobutyric acid (GABA), a major inhibitory neurotransmitter in the brain. GABA-gated chloride channels, also named GABA(A) receptors (GABAAR), consist of five subunits arranged around a central pore and contain GABA active binding site(s) located at the alpha and beta subunit interface(s). When activated by GABA, GABAARs selectively allow the flow of chloride anions across the cell membrane down their electrochemical gradient. Chloride influx into the postsynaptic neuron following GABAAR opening decreases the neuron ability to generate a new action potential, thereby reducing nerve transmission. Beta-containing GABAARs can simultaneously bind GABA and histamine where histamine binds at the interface of two neighboring beta subunits, which may be involved in the regulation of sleep and wakefulness. This Bos taurus (Bovine) protein is Gamma-aminobutyric acid receptor subunit beta-1 (GABRB1).